A 313-amino-acid polypeptide reads, in one-letter code: Ornithine carbamoyltransferase (313 aa).

Carbamoyl phosphate contacts are provided by residues 57–60 (STRT), Gln84, Arg108, and 135–138 (HPCQ). Residues Asn166, Asp230, and 234–235 (SM) contribute to the L-ornithine site. Carbamoyl phosphate is bound by residues 270-271 (CL) and Arg298.

Belongs to the aspartate/ornithine carbamoyltransferase superfamily. OTCase family. Homohexamer.

The protein resides in the cytoplasm. The catalysed reaction is carbamoyl phosphate + L-ornithine = L-citrulline + phosphate + H(+). Its pathway is amino-acid biosynthesis; L-arginine biosynthesis; L-arginine from L-ornithine and carbamoyl phosphate: step 1/3. Its function is as follows. Reversibly catalyzes the transfer of the carbamoyl group from carbamoyl phosphate (CP) to the N(epsilon) atom of ornithine (ORN) to produce L-citrulline. This Gloeobacter violaceus (strain ATCC 29082 / PCC 7421) protein is Ornithine carbamoyltransferase.